The chain runs to 280 residues: Secreted RxLR effector protein 39 (280 aa).

The signal sequence occupies residues 1-19; the sequence is MRGAYYVAIALLIVASCSA. The RxLR-dEER motif lies at 49–70; it reads RVLRGSRDLKNKWAVHAGGEDR. Positions 229-249 are disordered; the sequence is EVKARSSKRQRTNPMLNNMDG.

It belongs to the RxLR effector family.

It localises to the secreted. Its subcellular location is the host nucleus. Its function is as follows. Secreted effector that completely suppresses the host cell death induced by cell death-inducing proteins. The protein is Secreted RxLR effector protein 39 of Plasmopara viticola (Downy mildew of grapevine).